The chain runs to 78 residues: Probable [Fe-S]-dependent transcriptional repressor (78 aa).

Iron-sulfur cluster contacts are provided by Cys-56, Cys-61, Cys-64, and Cys-70.

Belongs to the FeoC family.

Functionally, may function as a transcriptional regulator that controls feoABC expression. The polypeptide is Probable [Fe-S]-dependent transcriptional repressor (Escherichia coli O9:H4 (strain HS)).